A 156-amino-acid polypeptide reads, in one-letter code: Nascent polypeptide-associated complex subunit beta (156 aa).

Disordered regions lie at residues 1-42 and 129-156; these read MPID…KDDT and QANE…AEVE. In terms of domain architecture, NAC-A/B spans 38–103; that stretch reads NKDDTKLHNQ…AQEKNLQELF (66 aa).

The protein belongs to the NAC-beta family. Part of the nascent polypeptide-associated complex (NAC), consisting of EGD2 and EGD1. NAC associates with ribosomes via EGD1.

Its subcellular location is the cytoplasm. It is found in the nucleus. Functionally, component of the nascent polypeptide-associated complex (NAC), a dynamic component of the ribosomal exit tunnel, protecting the emerging polypeptides from interaction with other cytoplasmic proteins to ensure appropriate nascent protein targeting. The NAC complex also promotes mitochondrial protein import by enhancing productive ribosome interactions with the outer mitochondrial membrane and blocks the inappropriate interaction of ribosomes translating non-secretory nascent polypeptides with translocation sites in the membrane of the endoplasmic reticulum. EGD1 may act as a transcription factor that exert a negative effect on the expression of several genes that are transcribed by RNA polymerase II. The polypeptide is Nascent polypeptide-associated complex subunit beta (EGD1) (Candida glabrata (strain ATCC 2001 / BCRC 20586 / JCM 3761 / NBRC 0622 / NRRL Y-65 / CBS 138) (Yeast)).